Here is a 747-residue protein sequence, read N- to C-terminus: MDFLDEPFPDVGTYEDFHTIDWLREKSRDTDRHRKITSKSKESIWEFIKSLLDAWSGWVVMLLIGLLAGTLAGVIDLAVDWMTDLKEGVCLSAFWYSHEQCCWTSNETTFEDRDKCPLWQKWSELLLSQSEGASAYILNYLMYILWALLFAFLAVSLVRVFAPYACGSGIPEIKTILSGFIIRGYLGKWTLLIKTVTLVLVVSSGLSLGKEGPLVHVACCCGNFFSSLFSKYSKNEGKRREVLSAAAAAGVSVAFGAPIGGVLFSLEEVSYYFPLKTLWRSFFAALVAAFTLRSINPFGNSRLVLFYVEYHTPWYMAELFPFILLGVFGGLWGTVFTRCNIAWCRRRKTTRLGKYPVLEVIVVTAITAIIAYPNPYTRQSTSELISELFNDCGALESSQLCDYINDPNMTRPVDDIPDRPAGVGVYTAMWQLALALIFKIVITIFTFGMKIPSGLFIPSMAVGAMAGRMVGIGVEQLAYHHHDWIIFRNWCRPGADCVTPGLYAMVGAAACLGGVTRMTVSLVVIMFELTGGLEYIVPLMAAAVTSKWVADAFGKEGIYEAHIHLNGYPFLDVKDEFTHRTLATDVMRPRRGEPPLSVLTQDSMTVEDVETLIKETDYNGFPVVVSRDSERLIGFAQRRELILAIKNARQRQEGIVSNSIMYFTEEPPELPANSPHPLKLRRILNLSPFTVTDHTPMETVVDIFRKLGLRQCLVTRSGRLLGIITKKDVLRHMAQMANQDPESIIFN.

The segment at 1–50 (MDFLDEPFPDVGTYEDFHTIDWLREKSRDTDRHRKITSKSKESIWEFIKS) is required for localization in the endoplasmic reticulum. At 1–54 (MDFLDEPFPDVGTYEDFHTIDWLREKSRDTDRHRKITSKSKESIWEFIKSLLDA) the chain is on the cytoplasmic side. 2 consecutive transmembrane segments (helical) span residues 55 to 92 (WSGW…VCLS) and 138 to 161 (LNYL…VRVF). The short motif at 167–171 (GSGIP) is the Selectivity filter part_1 element. Ser-168 provides a ligand contact to chloride. The helical intramembrane region spans 170-177 (IPEIKTIL). Helical transmembrane passes span 187-205 (GKWT…VSSG) and 211-230 (EGPL…SLFS). The Selectivity filter part_2 signature appears at 209–213 (GKEGP). 2 intramembrane regions (helical) span residues 242–254 (VLSA…VSVA) and 258–266 (PIGGVLFSL). Helical transmembrane passes span 278–296 (LWRS…RSIN), 320–345 (FPFI…AWCR), 352–372 (LGKY…IIAY), 429–449 (MWQL…TFGM), and 454–473 (GLFI…VGIG). Positions 454-458 (GLFIP) match the Selectivity filter part_3 motif. Phe-456 lines the chloride pocket. 2 consecutive intramembrane regions (helical) follow at residues 501-515 (GLYA…LGGV) and 519-530 (TVSLVVIMFELT). Positions 531-534 (GGLE) form an intramembrane region, note=Loop between two helices. The chain crosses the membrane as a helical span at residues 535–553 (YIVPLMAAAVTSKWVADAF). The Cytoplasmic segment spans residues 554 to 747 (GKEGIYEAHI…NQDPESIIFN (194 aa)). A chloride-binding site is contributed by Tyr-559. The CBS 1 domain occupies 587-653 (MRPRRGEPPL…AIKNARQRQE (67 aa)). ATP contacts are provided by residues Ser-597 and 618-620 (YNG). A required for localization in the endoplasmic reticulum region spans residues 654 to 683 (GIVSNSIMYFTEEPPELPANSPHPLKLRRI). The CBS 2 domain occupies 684 to 742 (LNLSPFTVTDHTPMETVVDIFRKLGLRQCLVTRSGRLLGIITKKDVLRHMAQMANQDPE). Residue 725-728 (TKKD) participates in ATP binding.

Belongs to the chloride channel (TC 2.A.49) family. ClC-4/CLCN4 subfamily. In terms of tissue distribution, strongly expressed in liver and brain, but also in heart, muscle, kidney and spleen.

It is found in the early endosome membrane. It localises to the late endosome membrane. Its subcellular location is the endoplasmic reticulum membrane. The protein resides in the lysosome membrane. The protein localises to the recycling endosome membrane. Strongly outwardly rectifying, electrogenic H(+)/Cl(-)exchanger which mediates the exchange of chloride ions against protons. The CLC channel family contains both chloride channels and proton-coupled anion transporters that exchange chloride or another anion for protons. The presence of conserved gating glutamate residues is typical for family members that function as antiporters. The polypeptide is H(+)/Cl(-) exchange transporter 4 (Clcn4) (Rattus norvegicus (Rat)).